Consider the following 859-residue polypeptide: Bifunctional uridylyltransferase/uridylyl-removing enzyme (859 aa).

The uridylyltransferase stretch occupies residues 1 to 325; the sequence is MSAHAAPSPE…PATSGITRVL (325 aa). A uridylyl-removing region spans residues 326–682; that stretch reads SHDRFVEKQG…ARPSPIGDAL (357 aa). The HD domain maps to 444–566; it reads VDQHILMVLR…VGNERYLTAL (123 aa). ACT domains are found at residues 683-762 and 791-859; these read QVLV…PEPS and ILSV…AIAV.

The protein belongs to the GlnD family. Mg(2+) serves as cofactor.

The enzyme catalyses [protein-PII]-L-tyrosine + UTP = [protein-PII]-uridylyl-L-tyrosine + diphosphate. It catalyses the reaction [protein-PII]-uridylyl-L-tyrosine + H2O = [protein-PII]-L-tyrosine + UMP + H(+). Its activity is regulated as follows. Uridylyltransferase (UTase) activity is inhibited by glutamine, while glutamine activates uridylyl-removing (UR) activity. In terms of biological role, modifies, by uridylylation and deuridylylation, the PII regulatory proteins (GlnB and homologs), in response to the nitrogen status of the cell that GlnD senses through the glutamine level. Under low glutamine levels, catalyzes the conversion of the PII proteins and UTP to PII-UMP and PPi, while under higher glutamine levels, GlnD hydrolyzes PII-UMP to PII and UMP (deuridylylation). Thus, controls uridylylation state and activity of the PII proteins, and plays an important role in the regulation of nitrogen fixation and metabolism. The sequence is that of Bifunctional uridylyltransferase/uridylyl-removing enzyme from Burkholderia vietnamiensis (strain G4 / LMG 22486) (Burkholderia cepacia (strain R1808)).